The primary structure comprises 398 residues: Acetate kinase (398 aa).

Position 9 (Asn-9) interacts with Mg(2+). Lys-16 contributes to the ATP binding site. Arg-93 contributes to the substrate binding site. The active-site Proton donor/acceptor is Asp-150. ATP contacts are provided by residues 209–213 (HLGAG), 284–286 (DMR), and 329–333 (GIGEH). A Mg(2+)-binding site is contributed by Glu-382.

The protein belongs to the acetokinase family. In terms of assembly, homodimer. Requires Mg(2+) as cofactor. Mn(2+) is required as a cofactor.

It localises to the cytoplasm. The enzyme catalyses acetate + ATP = acetyl phosphate + ADP. The protein operates within metabolic intermediate biosynthesis; acetyl-CoA biosynthesis; acetyl-CoA from acetate: step 1/2. Functionally, catalyzes the formation of acetyl phosphate from acetate and ATP. Can also catalyze the reverse reaction. This Rhodopseudomonas palustris (strain ATCC BAA-98 / CGA009) protein is Acetate kinase.